We begin with the raw amino-acid sequence, 208 residues long: Thymidylate kinase (208 aa).

Position 10-17 (10-17 (GLEGAGKT)) interacts with ATP.

Belongs to the thymidylate kinase family.

The enzyme catalyses dTMP + ATP = dTDP + ADP. Phosphorylation of dTMP to form dTDP in both de novo and salvage pathways of dTTP synthesis. The sequence is that of Thymidylate kinase from Actinobacillus pleuropneumoniae serotype 5b (strain L20).